The sequence spans 652 residues: DNA ligase (652 aa).

Residues 29 to 33 (DAEYD), 78 to 79 (SL), and Glu-107 each bind NAD(+). The active-site N6-AMP-lysine intermediate is the Lys-109. 4 residues coordinate NAD(+): Arg-130, Glu-164, Lys-278, and Lys-302. Zn(2+) contacts are provided by Cys-395, Cys-398, Cys-413, and Cys-418. The 76-residue stretch at 577 to 652 (ASDAALTGMT…IKDEAWLESL (76 aa)) folds into the BRCT domain.

It belongs to the NAD-dependent DNA ligase family. LigA subfamily. Mg(2+) serves as cofactor. Mn(2+) is required as a cofactor.

The enzyme catalyses NAD(+) + (deoxyribonucleotide)n-3'-hydroxyl + 5'-phospho-(deoxyribonucleotide)m = (deoxyribonucleotide)n+m + AMP + beta-nicotinamide D-nucleotide.. DNA ligase that catalyzes the formation of phosphodiester linkages between 5'-phosphoryl and 3'-hydroxyl groups in double-stranded DNA using NAD as a coenzyme and as the energy source for the reaction. It is essential for DNA replication and repair of damaged DNA. In Streptococcus mutans serotype c (strain ATCC 700610 / UA159), this protein is DNA ligase.